Here is a 459-residue protein sequence, read N- to C-terminus: Autophagy-related protein 18 (459 aa).

2 WD repeats span residues 1-39 (MTSP…RIFS) and 188-228 (AHRS…KLYQ). Positions 229–232 (FRRG) are necessary for proper localization to vacuole membrane. A L/FRRG motif motif is present at residues 229 to 233 (FRRGT). The WD 3 repeat unit spans residues 233 to 272 (TYPSTIYSMSFNLSSTLLCVSSTSDTIHIFRLGAPPGNTT). The interval 264–339 (LGAPPGNTTP…RGSGSFSSML (76 aa)) is disordered. A compositionally biased stretch (low complexity) spans 265–277 (GAPPGNTTPAGAP). A compositionally biased stretch (basic and acidic residues) spans 285-296 (RQDRWSRARSYD). The segment covering 319–330 (PGAGNNQGGHTR) has biased composition (gly residues). One copy of the WD 4 repeat lies at 393–433 (APGGPLRSVVAMSSSSPQVMVVTSDGGFYVYNIDMEHGGEG).

Belongs to the WD repeat PROPPIN family. As to quaternary structure, component of the PI(3,5)P2 regulatory complex. Interacts with ATG2 and ATG9. The ATG2-ATG18 complex is essential for autophagosome formation.

Its subcellular location is the preautophagosomal structure membrane. It is found in the vacuole membrane. The protein localises to the endosome membrane. In terms of biological role, component of the PI(3,5)P2 regulatory complex that regulates both the synthesis and turnover of phosphatidylinositol 3,5-bisphosphate (PtdIns(3,5)P2). Plays an important role in osmotically-induced vacuole fragmentation. Required for cytoplasm to vacuole transport (Cvt) vesicle formation, pexophagy and starvation-induced autophagy. Involved in correct ATG9 trafficking to the pre-autophagosomal structure. With ATG2, protects ATG8 from ATG4-mediated cleavage. Autophagy is required for proper vegetative growth, asexual/sexual reproduction, and full virulence. Autophagy is particularly involved in the biosynthesis of deoxynivalenol (DON), an important virulence determinant. This is Autophagy-related protein 18 from Gibberella zeae (strain ATCC MYA-4620 / CBS 123657 / FGSC 9075 / NRRL 31084 / PH-1) (Wheat head blight fungus).